The primary structure comprises 959 residues: Glycine dehydrogenase (decarboxylating) (959 aa).

Lysine 708 is modified (N6-(pyridoxal phosphate)lysine).

The protein belongs to the GcvP family. As to quaternary structure, the glycine cleavage system is composed of four proteins: P, T, L and H. It depends on pyridoxal 5'-phosphate as a cofactor.

The catalysed reaction is N(6)-[(R)-lipoyl]-L-lysyl-[glycine-cleavage complex H protein] + glycine + H(+) = N(6)-[(R)-S(8)-aminomethyldihydrolipoyl]-L-lysyl-[glycine-cleavage complex H protein] + CO2. The glycine cleavage system catalyzes the degradation of glycine. The P protein binds the alpha-amino group of glycine through its pyridoxal phosphate cofactor; CO(2) is released and the remaining methylamine moiety is then transferred to the lipoamide cofactor of the H protein. The chain is Glycine dehydrogenase (decarboxylating) from Yersinia pseudotuberculosis serotype O:1b (strain IP 31758).